Consider the following 305-residue polypeptide: Aspartate carbamoyltransferase catalytic subunit (305 aa).

Residues R58 and T59 each coordinate carbamoyl phosphate. K86 is an L-aspartate binding site. Residues R108, H136, and Q139 each coordinate carbamoyl phosphate. L-aspartate is bound by residues R169 and R223. Residues G264 and P265 each coordinate carbamoyl phosphate.

The protein belongs to the aspartate/ornithine carbamoyltransferase superfamily. ATCase family. In terms of assembly, heterododecamer (2C3:3R2) of six catalytic PyrB chains organized as two trimers (C3), and six regulatory PyrI chains organized as three dimers (R2).

It catalyses the reaction carbamoyl phosphate + L-aspartate = N-carbamoyl-L-aspartate + phosphate + H(+). Its pathway is pyrimidine metabolism; UMP biosynthesis via de novo pathway; (S)-dihydroorotate from bicarbonate: step 2/3. In terms of biological role, catalyzes the condensation of carbamoyl phosphate and aspartate to form carbamoyl aspartate and inorganic phosphate, the committed step in the de novo pyrimidine nucleotide biosynthesis pathway. This chain is Aspartate carbamoyltransferase catalytic subunit, found in Syntrophobacter fumaroxidans (strain DSM 10017 / MPOB).